The chain runs to 682 residues: Potassium-transporting ATPase ATP-binding subunit (682 aa).

The next 4 helical transmembrane spans lie at 34-54 (PVMF…IAMA), 62-82 (ALFS…ANFA), 219-239 (IALT…TATL), and 254-274 (VLVA…LSAI). Residue Asp-307 is the 4-aspartylphosphate intermediate of the active site. Residues Asp-344, Glu-348, 377–384 (FTAQSRMS), and Lys-395 contribute to the ATP site. Residues Asp-518 and Asp-522 each coordinate Mg(2+). Helical transmembrane passes span 588–608 (FAII…LNIM), 616–636 (AILS…PLAL), and 656–676 (IYGL…DLLL).

The protein belongs to the cation transport ATPase (P-type) (TC 3.A.3) family. Type IA subfamily. The system is composed of three essential subunits: KdpA, KdpB and KdpC.

It is found in the cell inner membrane. It carries out the reaction K(+)(out) + ATP + H2O = K(+)(in) + ADP + phosphate + H(+). Functionally, part of the high-affinity ATP-driven potassium transport (or Kdp) system, which catalyzes the hydrolysis of ATP coupled with the electrogenic transport of potassium into the cytoplasm. This subunit is responsible for energy coupling to the transport system and for the release of the potassium ions to the cytoplasm. In Shigella sonnei (strain Ss046), this protein is Potassium-transporting ATPase ATP-binding subunit.